A 397-amino-acid chain; its full sequence is Nuclear pore complex-interacting protein family member B2 (397 aa).

Positions 256 to 397 (NRMGHQPPPP…KLRTGHCTQA (142 aa)) are disordered. Residues 267 to 277 (QQHSITDNSLS) show a composition bias toward polar residues. The segment covering 278 to 287 (LKTPPECLLT) has biased composition (low complexity). A compositionally biased stretch (basic residues) spans 382 to 391 (KRRRLSKLRT).

This sequence belongs to the NPIP family.

The protein resides in the nucleus. The chain is Nuclear pore complex-interacting protein family member B2 from Homo sapiens (Human).